Here is a 245-residue protein sequence, read N- to C-terminus: MAKRKEVTEISEMDIKKSGFVNRLYRETCDISNKYIKFDDDGDKLIIPNKIDFIKKALNKISSTKDYSSFVRQLNNYGFTKIKLDNGDSNCDIYYHQNFHRDHPDLISLITRDKSKNGDYKDNMTTFINSLQYLASCNYKQQKEINDLKDRIKTLETKYATLYEIISNAFRQGIEQYQKHNTMYFNNNSLLKNMFTYNQELDDLKDNTNVYNNAKLINQLKLDAKNSNQDDNIKKTKNAFDEFYF.

The DNA-binding element occupies 17–115; sequence KSGFVNRLYR…LISLITRDKS (99 aa). The interval 130-169 is involved in trimerization; the sequence is SLQYLASCNYKQQKEINDLKDRIKTLETKYATLYEIISNA.

This sequence belongs to the HSF family. Homotrimer. Homotrimerization increases the affinity of HSF1 to DNA.

It localises to the nucleus. In terms of biological role, DNA-binding transcription factor that specifically binds heat shock promoter elements (HSE) and activates transcription. This is Heat shock transcription factor from Enterocytozoon bieneusi (strain H348) (Microsporidian parasite).